The following is a 242-amino-acid chain: Probable transcriptional regulatory protein XCV3282 (242 aa).

It belongs to the TACO1 family.

Its subcellular location is the cytoplasm. The protein is Probable transcriptional regulatory protein XCV3282 of Xanthomonas euvesicatoria pv. vesicatoria (strain 85-10) (Xanthomonas campestris pv. vesicatoria).